The following is a 246-amino-acid chain: Ribonuclease 3 (246 aa).

Residues 18-147 (FQELQNKIGI…FIGALYLDQG (130 aa)) form the RNase III domain. E60 serves as a coordination point for Mg(2+). D64 is an active-site residue. Mg(2+)-binding residues include D133 and E136. Residue E136 is part of the active site. Residues 173 to 242 (DFKSQLQELV…AQMALETLRA (70 aa)) enclose the DRBM domain.

Belongs to the ribonuclease III family. In terms of assembly, homodimer. Mg(2+) is required as a cofactor.

The protein resides in the cytoplasm. The catalysed reaction is Endonucleolytic cleavage to 5'-phosphomonoester.. Functionally, digests double-stranded RNA. Involved in the processing of primary rRNA transcript to yield the immediate precursors to the large and small rRNAs (23S and 16S). Processes some mRNAs, and tRNAs when they are encoded in the rRNA operon. Processes pre-crRNA and tracrRNA of type II CRISPR loci if present in the organism. This chain is Ribonuclease 3, found in Geobacillus kaustophilus (strain HTA426).